Reading from the N-terminus, the 144-residue chain is Mannitol-specific phosphotransferase enzyme IIA component (144 aa).

Residues 3 to 142 (ELFSNDNIFL…EEIKQVFEEA (140 aa)) enclose the PTS EIIA type-2 domain. Histidine 63 functions as the Tele-phosphohistidine intermediate in the catalytic mechanism. Position 63 is a phosphohistidine; by HPr (histidine 63).

In terms of assembly, homodimer or homotrimer. Seems to be a monomer when not phosphorylated.

The protein localises to the cytoplasm. Functionally, the phosphoenolpyruvate-dependent sugar phosphotransferase system (sugar PTS), a major carbohydrate active transport system, catalyzes the phosphorylation of incoming sugar substrates concomitantly with their translocation across the cell membrane. The enzyme II CmtAB PTS system is involved in D-mannitol transport. This chain is Mannitol-specific phosphotransferase enzyme IIA component (mtlF), found in Staphylococcus aureus (strain COL).